A 967-amino-acid chain; its full sequence is Aminopeptidase N (967 aa).

The Cytoplasmic segment spans residues 2–8; the sequence is AKGFYIS. The chain crosses the membrane as a helical; Signal-anchor for type II membrane protein span at residues 9–32; the sequence is KSLGILGILLGVAAVCTIIALSVV. The cytosolic Ser/Thr-rich junction stretch occupies residues 33–68; sequence YSQEKNKNANSSPVASTTPSASATTNPASATTLDQS. The Extracellular segment spans residues 33 to 967; the sequence is YSQEKNKNAN…VLQWFTENSK (935 aa). The segment at 40–62 is disordered; the sequence is NANSSPVASTTPSASATTNPASA. Residues 41–62 are compositionally biased toward low complexity; that stretch reads ANSSPVASTTPSASATTNPASA. A metalloprotease region spans residues 69–967; the sequence is KAWNRYRLPN…VLQWFTENSK (899 aa). A glycan (N-linked (GlcNAc...) asparagine) is linked at Asn128. Tyr176 is modified (sulfotyrosine). 2 N-linked (GlcNAc...) asparagine glycosylation sites follow: Asn234 and Asn265. The interval 288 to 295 is necessary and sufficient to mediate interaction with HCoV-229E; that stretch reads DYVEKQAS. Asn319 carries N-linked (GlcNAc...) asparagine glycosylation. Substrate is bound at residue 352 to 356; sequence GAMEN. His388 serves as a coordination point for Zn(2+). The Proton acceptor role is filled by Glu389. Residues His392 and Glu411 each coordinate Zn(2+). Sulfotyrosine occurs at positions 419 and 424. Residues Asn527, Asn573, Asn625, Asn681, and Asn735 are each glycosylated (N-linked (GlcNAc...) asparagine). 2 cysteine pairs are disulfide-bonded: Cys761–Cys768 and Cys798–Cys834. A glycan (N-linked (GlcNAc...) asparagine) is linked at Asn818. Residue Tyr913 is modified to Sulfotyrosine.

Belongs to the peptidase M1 family. Homodimer. Interacts with SLC6A19. As to quaternary structure, (Microbial infection) Interacts with the S1 domain of human coronavirus 229E/HCoV-229E spike protein. It depends on Zn(2+) as a cofactor. In terms of processing, sulfated. N- and O-glycosylated. Post-translationally, may undergo proteolysis and give rise to a soluble form. Expressed in epithelial cells of the kidney, intestine, and respiratory tract; granulocytes, monocytes, fibroblasts, endothelial cells, cerebral pericytes at the blood-brain barrier, synaptic membranes of cells in the CNS. Also expressed in endometrial stromal cells, but not in the endometrial glandular cells. Found in the vasculature of tissues that undergo angiogenesis and in malignant gliomas and lymph node metastases from multiple tumor types but not in blood vessels of normal tissues. A soluble form has been found in plasma. It is found to be elevated in plasma and effusions of cancer patients.

The protein localises to the cell membrane. It carries out the reaction Release of an N-terminal amino acid, Xaa-|-Yaa- from a peptide, amide or arylamide. Xaa is preferably Ala, but may be most amino acids including Pro (slow action). When a terminal hydrophobic residue is followed by a prolyl residue, the two may be released as an intact Xaa-Pro dipeptide.. Its function is as follows. Broad specificity aminopeptidase which plays a role in the final digestion of peptides generated from hydrolysis of proteins by gastric and pancreatic proteases. Also involved in the processing of various peptides including peptide hormones, such as angiotensin III and IV, neuropeptides, and chemokines. May also be involved the cleavage of peptides bound to major histocompatibility complex class II molecules of antigen presenting cells. May have a role in angiogenesis and promote cholesterol crystallization. May have a role in amino acid transport by acting as binding partner of amino acid transporter SLC6A19 and regulating its activity. (Microbial infection) Acts as a receptor for human coronavirus 229E/HCoV-229E. In case of human coronavirus 229E (HCoV-229E) infection, serves as receptor for HCoV-229E spike glycoprotein. In terms of biological role, (Microbial infection) Mediates as well Human cytomegalovirus (HCMV) infection. This Homo sapiens (Human) protein is Aminopeptidase N (ANPEP).